The primary structure comprises 241 residues: MAEEQPQVELFVKAGSDGAKIGNCPFSQRLFMVLWLKGVTFNVTTVDTKRRTETVQKLCPGGQLPFLLYGTEVHTDTNKIEEFLEAVLCPPRYPKLAALNPESNTAGLDIFAKFSAYIKNSNPALNDNLEKGLLKALKVLDNYLTSPLPDEVDETSAEDEGISQRKFLDGNELTLADCNLLPKLHIVQVVCKKYRGFSIPDVFRGVHRYLRNAYAREEFASTCPDDEEIELAYEQVAKALK.

Ala-2 is subject to N-acetylalanine. Positions 2-90 (AEEQPQVELF…EEFLEAVLCP (89 aa)) are required for insertion into the membrane. Lys-13 carries the N6-acetyllysine modification. The G-site signature appears at 24–27 (CPFS). A disulfide bond links Cys-24 and Cys-59. Residues 26 to 46 (FSQRLFMVLWLKGVTFNVTTV) form a helical membrane-spanning segment. The region spanning 93 to 233 (YPKLAALNPE…PDDEEIELAY (141 aa)) is the GST C-terminal domain. N6-acetyllysine is present on Lys-119. Ser-121 is subject to Phosphoserine. Residue Lys-131 is modified to N6-acetyllysine. The residue at position 156 (Ser-156) is a Phosphoserine. Position 233 is a phosphotyrosine (Tyr-233).

This sequence belongs to the chloride channel CLIC family. In terms of assembly, monomer. Homodimer (in vitro). Interacts with TRAPPC2. Dimerization requires a conformation change that leads to the exposure of a large hydrophobic surface. In vivo, this may lead to membrane insertion.

It localises to the nucleus. It is found in the nucleus membrane. Its subcellular location is the cytoplasm. The protein resides in the cell membrane. The protein localises to the endoplasmic reticulum. It catalyses the reaction L-dehydroascorbate + 2 glutathione = glutathione disulfide + L-ascorbate. The enzyme catalyses chloride(in) = chloride(out). It carries out the reaction iodide(out) = iodide(in). The catalysed reaction is thiocyanate(in) = thiocyanate(out). It catalyses the reaction nitrate(in) = nitrate(out). The enzyme catalyses bromide(in) = bromide(out). It carries out the reaction fluoride(in) = fluoride(out). Its function is as follows. In the soluble state, catalyzes glutaredoxin-like thiol disulfide exchange reactions with reduced glutathione as electron donor. Reduces selenite and dehydroascorbate and may act as an antioxidant during oxidative stress response. Can insert into membranes and form voltage-dependent multi-ion conductive channels. Membrane insertion seems to be redox-regulated and may occur only under oxidizing conditions. Involved in regulation of the cell cycle. This is Chloride intracellular channel protein 1 (CLIC1) from Bos taurus (Bovine).